We begin with the raw amino-acid sequence, 314 residues long: 3'-5' exoribonuclease YhaM (314 aa).

An HD domain is found at 163 to 279 (HVVSMLDLAK…LHYIDNLDAK (117 aa)).

This sequence belongs to the YhaM family.

In terms of biological role, shows a 3'-5' exoribonuclease activity. This Bacillus anthracis (strain CDC 684 / NRRL 3495) protein is 3'-5' exoribonuclease YhaM.